The primary structure comprises 317 residues: tRNA pseudouridine synthase B (317 aa).

The active-site Nucleophile is D47.

This sequence belongs to the pseudouridine synthase TruB family. Type 1 subfamily.

It carries out the reaction uridine(55) in tRNA = pseudouridine(55) in tRNA. Responsible for synthesis of pseudouridine from uracil-55 in the psi GC loop of transfer RNAs. The polypeptide is tRNA pseudouridine synthase B (Shewanella frigidimarina (strain NCIMB 400)).